A 197-amino-acid polypeptide reads, in one-letter code: Recombination protein RecR (197 aa).

Residues 57-72 (CSRCGYLTDFDPCLIC) form a C4-type zinc finger. The Toprim domain maps to 80–174 (SLICIGEESS…KVTRLAHGLP (95 aa)).

This sequence belongs to the RecR family.

Functionally, may play a role in DNA repair. It seems to be involved in an RecBC-independent recombinational process of DNA repair. It may act with RecF and RecO. In Syntrophomonas wolfei subsp. wolfei (strain DSM 2245B / Goettingen), this protein is Recombination protein RecR.